A 179-amino-acid polypeptide reads, in one-letter code: Replication restart protein DnaT (179 aa).

Positions 154–179 (SNGGLPKRDVNTVSEPDSQIPPGFRG) are disordered.

The protein belongs to the DnaT family. As to quaternary structure, homooligomerizes. Interacts with PriB. Component of the replication restart primosome. Primosome assembly occurs via a 'hand-off' mechanism. PriA binds to replication forks, subsequently PriB then DnaT bind; DnaT then displaces ssDNA to generate the helicase loading substrate.

Its function is as follows. Involved in the restart of stalled replication forks, which reloads the replicative helicase on sites other than the origin of replication. Can function in multiple replication restart pathways. Displaces ssDNA from a PriB-ssDNA complex. Probably forms a spiral filament on ssDNA. This is Replication restart protein DnaT from Escherichia coli O127:H6 (strain E2348/69 / EPEC).